The following is a 486-amino-acid chain: Hexosaminidase D (486 aa).

Glu149 serves as the catalytic Proton donor.

This sequence belongs to the glycosyl hydrolase 20 family. As to quaternary structure, homodimer; disulfide-linked. Expressed in synovial fibroblasts and synovial membranes.

It localises to the cytoplasm. Its subcellular location is the nucleus. The protein resides in the extracellular vesicle. The catalysed reaction is Hydrolysis of terminal non-reducing N-acetyl-D-hexosamine residues in N-acetyl-beta-D-hexosaminides.. Inhibited by O-(2-acetamido-2-deoxy-D-glucopyranosylidene)amino N-phenylcarbamate (PUGNAc). Inhibited by galacto-NAG-thiazoline. Its function is as follows. Has hexosaminidase activity. Responsible for the cleavage of the monosaccharides N-acetylglucosamine (GlcNAc) and N-acetylgalactosamine (GalNAc) from cellular substrates. Has a preference for galactosaminide over glucosaminide substrates. The chain is Hexosaminidase D from Homo sapiens (Human).